Reading from the N-terminus, the 125-residue chain is Ribosome-binding factor A (125 aa).

This sequence belongs to the RbfA family. In terms of assembly, monomer. Binds 30S ribosomal subunits, but not 50S ribosomal subunits or 70S ribosomes.

The protein localises to the cytoplasm. Functionally, one of several proteins that assist in the late maturation steps of the functional core of the 30S ribosomal subunit. Associates with free 30S ribosomal subunits (but not with 30S subunits that are part of 70S ribosomes or polysomes). Required for efficient processing of 16S rRNA. May interact with the 5'-terminal helix region of 16S rRNA. In Chloroherpeton thalassium (strain ATCC 35110 / GB-78), this protein is Ribosome-binding factor A.